We begin with the raw amino-acid sequence, 305 residues long: tRNA dimethylallyltransferase (305 aa).

12-19 (GPTASGKT) serves as a coordination point for ATP. A substrate-binding site is contributed by 14–19 (TASGKT). 3 interaction with substrate tRNA regions span residues 37–40 (DSAL), 161–165 (QRLAR), and 242–247 (RCVGYR).

The protein belongs to the IPP transferase family. Monomer. It depends on Mg(2+) as a cofactor.

It catalyses the reaction adenosine(37) in tRNA + dimethylallyl diphosphate = N(6)-dimethylallyladenosine(37) in tRNA + diphosphate. Its function is as follows. Catalyzes the transfer of a dimethylallyl group onto the adenine at position 37 in tRNAs that read codons beginning with uridine, leading to the formation of N6-(dimethylallyl)adenosine (i(6)A). This chain is tRNA dimethylallyltransferase, found in Psychromonas ingrahamii (strain DSM 17664 / CCUG 51855 / 37).